The primary structure comprises 188 residues: MRHLLTEVNVPIPDKVTITAKQRVVEVKGPLGTIKRAFRYASVDIQKPTADNVKLQIWQASRKERAVLQSIASQIKNMIRGVTEGYKFKMKLAFAHFPIQEAVAKDGSSIEIKHFLGEKRIRRIQALPGVKISRKDEEKNTLTLQGIDLNNVSQTCALIHQSCLVKEKDIRQFLDGIYVSDKRLAMNE.

The protein belongs to the universal ribosomal protein uL6 family.

The polypeptide is Large ribosomal subunit protein uL6 (RPL9) (Tetrahymena thermophila (strain SB210)).